A 124-amino-acid polypeptide reads, in one-letter code: Con-Ins Tx1 (124 aa).

An N-terminal signal peptide occupies residues 1–24 (MTTSSYFLLVALGLLLYVFQSSFG). 4 disulfide bridges follow: Cys-29–Cys-107, Cys-41–Cys-110, Cys-53–Cys-123, and Cys-109–Cys-114. Position 34 is a 4-hydroxyproline; partial (Pro-34). The propeptide at 59-92 (EQGGANNARANTGRTSSLMKRRGFLSLLKKRGKR) is c peptide. Residue Glu-118 is modified to 4-carboxyglutamate; partial.

The protein belongs to the insulin family. In terms of assembly, heterodimer of A and B chains; disulfide-linked. Expressed by the venom gland.

It is found in the secreted. Its function is as follows. This venom insulin facilitates prey capture by rapidly inducing hypoglycemic shock. Intraperitoneal injection of this peptide into zebrafish lowers blood glucose with the same potency than human insulin. In vivo, when applied to water, this peptide reduces overall locomotor activity of zebrafish larvae, observed as a significant decrease in the percentage of time spent swimming and movement frequency. The chain is Con-Ins Tx1 from Conus textile (Cloth-of-gold cone).